Reading from the N-terminus, the 548-residue chain is Folylpolyglutamate synthase (548 aa).

130 to 133 contributes to the ATP binding site; it reads GKGS. 3 residues coordinate Mg(2+): serine 157, glutamate 234, and histidine 262. Positions 382 and 396 each coordinate ATP.

It belongs to the folylpolyglutamate synthase family. It depends on a monovalent cation as a cofactor.

It localises to the mitochondrion inner membrane. Its subcellular location is the mitochondrion matrix. It is found in the cytoplasm. The enzyme catalyses (6S)-5,6,7,8-tetrahydrofolyl-(gamma-L-Glu)(n) + L-glutamate + ATP = (6S)-5,6,7,8-tetrahydrofolyl-(gamma-L-Glu)(n+1) + ADP + phosphate + H(+). Its pathway is cofactor biosynthesis; tetrahydrofolylpolyglutamate biosynthesis. Functionally, catalyzes conversion of folates to polyglutamate derivatives allowing concentration of folate compounds in the cell and the intracellular retention of these cofactors, which are important substrates for most of the folate-dependent enzymes that are involved in one-carbon transfer reactions involved in purine, pyrimidine and amino acid synthesis. Required for methionine synthesis and maintenance of intact mitochondrial DNA. Involved in telomere maintenance. This chain is Folylpolyglutamate synthase, found in Saccharomyces cerevisiae (strain FostersO) (Baker's yeast).